Here is a 246-residue protein sequence, read N- to C-terminus: Orotidine 5'-phosphate decarboxylase (246 aa).

Residues aspartate 22, lysine 44, 71–80 (DLKYHDIPHT), threonine 130, arginine 191, glutamine 201, glycine 221, and arginine 222 contribute to the substrate site. Lysine 73 functions as the Proton donor in the catalytic mechanism.

This sequence belongs to the OMP decarboxylase family. Type 1 subfamily. In terms of assembly, homodimer.

The enzyme catalyses orotidine 5'-phosphate + H(+) = UMP + CO2. Its pathway is pyrimidine metabolism; UMP biosynthesis via de novo pathway; UMP from orotate: step 2/2. Its function is as follows. Catalyzes the decarboxylation of orotidine 5'-monophosphate (OMP) to uridine 5'-monophosphate (UMP). In Neisseria meningitidis serogroup C (strain 053442), this protein is Orotidine 5'-phosphate decarboxylase.